We begin with the raw amino-acid sequence, 325 residues long: MAAMRKALPRRLVGLASLRAVSTSSMGTLPKRVKIVEVGPRDGLQNEKNIVSTPVKIKLIDMLSEAGLSVIETTSFVSPKWVPQMGDHTEVLKGIQKFPGINYPVLTPNLKGFEAAVAAGAKEVVIFGAASELFTKKNINCSIEESFQRFDAILKAAQSANISVRGYVSCALGCPYEGKISPAKVAEVTKKFYSMGCYEISLGDTIGVGTPGIMKDMLSAVMQEVPLAALAVHCHDTYGQALANTLMALQMGVSVVDSSVAGLGGCPYAQGASGNLATEDLVYMLEGLGIHTGVNLQKLLEAGNFICQALNRKTSSKVAQATCKL.

The N-terminal 27 residues, 1 to 27, are a transit peptide targeting the mitochondrion; sequence MAAMRKALPRRLVGLASLRAVSTSSMG. The Pyruvate carboxyltransferase domain occupies 33–300; the sequence is VKIVEVGPRD…HTGVNLQKLL (268 aa). Arg41 contributes to the substrate binding site. Asp42 contacts a divalent metal cation. An N6-acetyllysine; alternate modification is found at Lys48. Lys48 carries the post-translational modification N6-succinyllysine; alternate. Lys111 bears the N6-acetyllysine mark. Lys137 and Lys179 each carry N6-acetyllysine; alternate. Residues Lys137 and Lys179 each carry the N6-succinyllysine; alternate modification. A divalent metal cation-binding residues include His233 and His235. Cys266 is an active-site residue. Asn275 contributes to the a divalent metal cation binding site. A Microbody targeting signal motif is present at residues 323–325; that stretch reads CKL. At Lys324 the chain carries N6-acetyllysine.

This sequence belongs to the HMG-CoA lyase family. As to quaternary structure, homodimer; disulfide-linked. Can also form homotetramers. Requires a divalent metal cation as cofactor. Highest expression in liver. Expressed in pancreas, kidney, intestine, testis, fibroblasts and lymphoblasts. Very low expression in brain and skeletal muscle. The relative expression of isoform 2 (at mRNA level) is highest in heart (30%), skeletal muscle (22%), and brain (14%).

The protein resides in the mitochondrion matrix. The protein localises to the peroxisome. It catalyses the reaction (3S)-3-hydroxy-3-methylglutaryl-CoA = acetoacetate + acetyl-CoA. It functions in the pathway metabolic intermediate metabolism; (S)-3-hydroxy-3-methylglutaryl-CoA degradation; acetoacetate from (S)-3-hydroxy-3-methylglutaryl-CoA: step 1/1. Its activity is regulated as follows. Stimulated by reducing agents such as dithiothreitol (DTT). Its function is as follows. Mitochondrial 3-hydroxy-3-methylglutaryl-CoA lyase that catalyzes a cation-dependent cleavage of (S)-3-hydroxy-3-methylglutaryl-CoA into acetyl-CoA and acetoacetate, a key step in ketogenesis. Terminal step in leucine catabolism. Ketone bodies (beta-hydroxybutyrate, acetoacetate and acetone) are essential as an alternative source of energy to glucose, as lipid precursors and as regulators of metabolism. The sequence is that of Hydroxymethylglutaryl-CoA lyase, mitochondrial (HMGCL) from Homo sapiens (Human).